Reading from the N-terminus, the 250-residue chain is MTHCCSPCCQPTCCRTTCCRTTCWKPTTVTTCSSTPCCQPSCCVPSCCQPCCHPTCCQNTCCRTTCCQPTCVASCCQPSCCSTPCCQPTCCGSSCCGQTSCGSSCCQPICGSSCCQPCCHPTCYQTICFRTTCCQPTCCQPTCCRNTSCQPTCCGSSCCQPCCHPTCCQTICRSTCCQPSCVTRCCSTPCCQPTCGGSSCCSQTCNESSYCLPCCRPTCCQTTCYRTTCCRPSCCCSPCCVSSCCQPSCC.

32 tandem repeats follow at residues 8–12, 13–17, 18–22, 37–41, 42–46, 51–55, 56–60, 61–65, 66–70, 75–79, 80–84, 85–89, 90–94, 95–99, 105–109, 114–117, 118–121, 133–137, 138–142, 143–147, 153–157, 162–166, 167–171, 176–180, 185–189, 190–194, 214–218, 219–223, 229–233, 234–238, 239–243, and 244–248. Residues 8–248 are 32 X 5 AA repeats of C-C-[CGSVRQH]-[SQTNP]-[PTSI]; sequence CCQPTCCRTT…CCVSSCCQPS (241 aa).

This sequence belongs to the KRTAP type 9 family. In terms of assembly, interacts with hair keratins.

In the hair cortex, hair keratin intermediate filaments are embedded in an interfilamentous matrix, consisting of hair keratin-associated proteins (KRTAP), which are essential for the formation of a rigid and resistant hair shaft through their extensive disulfide bond cross-linking with abundant cysteine residues of hair keratins. The matrix proteins include the high-sulfur and high-glycine-tyrosine keratins. This chain is Keratin-associated protein 9-1, found in Homo sapiens (Human).